The sequence spans 908 residues: 26S proteasome non-ATPase regulatory subunit 2 (908 aa).

M1 carries the N-acetylmethionine modification. The interval M1–L52 is disordered. The segment covering P10–A20 has biased composition (low complexity). Residue S16 is modified to Phosphoserine. Position 24 is a phosphothreonine (T24). A compositionally biased stretch (basic and acidic residues) spans T24 to L52. Phosphoserine occurs at positions 29 and 147. Residue Y194 is modified to Phosphotyrosine. 2 positions are modified to phosphoserine: S361 and S363. PC repeat units lie at residues S409–S442, G443–L479, G480–V514, V517–K551, and L560–S589. N6-acetyllysine is present on K551. Over residues K623–P643 the composition is skewed to basic and acidic residues. Residues K623–D645 form a disordered region. 2 PC repeats span residues L692 to Y723 and A742 to N757. The segment at D708–N903 is required for interaction with UBLCP1.

The protein belongs to the proteasome subunit S2 family. As to quaternary structure, component of the 19S proteasome regulatory particle complex. The 26S proteasome consists of a 20S core particle (CP) and two 19S regulatory subunits (RP). The regulatory particle is made of a lid composed of 9 subunits, a base containing 6 ATPases and few additional components including PSMD2. Interacts with RPGRIP1L. Interacts with CRY1 in a KDM8-dependent manner. Interacts (via C-terminus) with phosphatase UBLCP1 (via ubiquitin-like domain); the interaction recruits UBLCP1 to the 19S regulatory particle where it dephosphorylates 19S subunit PSMC2/RPT1 which impairs PSMC2 ATPase activity and disrupts 26S proteasome assembly.

Functionally, component of the 26S proteasome, a multiprotein complex involved in the ATP-dependent degradation of ubiquitinated proteins. This complex plays a key role in the maintenance of protein homeostasis by removing misfolded or damaged proteins, which could impair cellular functions, and by removing proteins whose functions are no longer required. Therefore, the proteasome participates in numerous cellular processes, including cell cycle progression, apoptosis, or DNA damage repair. Binds to the intracellular domain of tumor necrosis factor type 1 receptor. The binding domain of TRAP1 and TRAP2 resides outside the death domain of TNFR1. The sequence is that of 26S proteasome non-ATPase regulatory subunit 2 (PSMD2) from Pongo abelii (Sumatran orangutan).